We begin with the raw amino-acid sequence, 296 residues long: tRNA dimethylallyltransferase (296 aa).

Position 2 to 9 (Gly2 to Thr9) interacts with ATP. Thr4–Thr9 provides a ligand contact to substrate. Interaction with substrate tRNA stretches follow at residues Asp27–Leu30, Gln151–Arg155, and Arg232–Arg237.

It belongs to the IPP transferase family. As to quaternary structure, monomer. Mg(2+) serves as cofactor.

The enzyme catalyses adenosine(37) in tRNA + dimethylallyl diphosphate = N(6)-dimethylallyladenosine(37) in tRNA + diphosphate. Its function is as follows. Catalyzes the transfer of a dimethylallyl group onto the adenine at position 37 in tRNAs that read codons beginning with uridine, leading to the formation of N6-(dimethylallyl)adenosine (i(6)A). The sequence is that of tRNA dimethylallyltransferase from Shewanella sp. (strain ANA-3).